Here is a 186-residue protein sequence, read N- to C-terminus: Ribosome-recycling factor (186 aa).

It belongs to the RRF family.

It is found in the cytoplasm. Its function is as follows. Responsible for the release of ribosomes from messenger RNA at the termination of protein biosynthesis. May increase the efficiency of translation by recycling ribosomes from one round of translation to another. The polypeptide is Ribosome-recycling factor (Chlorobium phaeovibrioides (strain DSM 265 / 1930) (Prosthecochloris vibrioformis (strain DSM 265))).